The following is a 228-amino-acid chain: Phosphoribosylformylglycinamidine synthase subunit PurQ (228 aa).

Residues 2–225 (KAAVISFPGS…INQTEGADVR (224 aa)) form the Glutamine amidotransferase type-1 domain. Cys-86 acts as the Nucleophile in catalysis. Active-site residues include His-194 and Glu-196.

In terms of assembly, part of the FGAM synthase complex composed of 1 PurL, 1 PurQ and 2 PurS subunits.

The protein localises to the cytoplasm. The catalysed reaction is N(2)-formyl-N(1)-(5-phospho-beta-D-ribosyl)glycinamide + L-glutamine + ATP + H2O = 2-formamido-N(1)-(5-O-phospho-beta-D-ribosyl)acetamidine + L-glutamate + ADP + phosphate + H(+). The enzyme catalyses L-glutamine + H2O = L-glutamate + NH4(+). The protein operates within purine metabolism; IMP biosynthesis via de novo pathway; 5-amino-1-(5-phospho-D-ribosyl)imidazole from N(2)-formyl-N(1)-(5-phospho-D-ribosyl)glycinamide: step 1/2. In terms of biological role, part of the phosphoribosylformylglycinamidine synthase complex involved in the purines biosynthetic pathway. Catalyzes the ATP-dependent conversion of formylglycinamide ribonucleotide (FGAR) and glutamine to yield formylglycinamidine ribonucleotide (FGAM) and glutamate. The FGAM synthase complex is composed of three subunits. PurQ produces an ammonia molecule by converting glutamine to glutamate. PurL transfers the ammonia molecule to FGAR to form FGAM in an ATP-dependent manner. PurS interacts with PurQ and PurL and is thought to assist in the transfer of the ammonia molecule from PurQ to PurL. This is Phosphoribosylformylglycinamidine synthase subunit PurQ from Lacticaseibacillus paracasei (strain ATCC 334 / BCRC 17002 / CCUG 31169 / CIP 107868 / KCTC 3260 / NRRL B-441) (Lactobacillus paracasei).